Reading from the N-terminus, the 858-residue chain is DNA mismatch repair protein MutS (858 aa).

600–607 contributes to the ATP binding site; sequence GPNMSGKS.

It belongs to the DNA mismatch repair MutS family.

In terms of biological role, this protein is involved in the repair of mismatches in DNA. It is possible that it carries out the mismatch recognition step. This protein has a weak ATPase activity. The chain is DNA mismatch repair protein MutS from Bacillus pumilus (strain SAFR-032).